Consider the following 81-residue polypeptide: Kappa-theraphotoxin-Gr2c (81 aa).

Positions 1–19 (MKAFFVILGLALLCAYSFA) are cleaved as a signal peptide. Residues 20–50 (LEEQDQLSLRNDLLTVMFAENSELTPETEER) constitute a propeptide that is removed on maturation. 3 disulfide bridges follow: Cys52–Cys66, Cys59–Cys71, and Cys65–Cys75.

Belongs to the neurotoxin 30 (phrixotoxin) family. Expressed by the venom gland.

Its subcellular location is the secreted. Functionally, inhibits sodium channels Nav1.1/SCN1A (IC(50)=5.7 uM), Nav1.2/SCN2A (IC(50)=12 uM), Nav1.4/SCN4A (IC(50)=4 uM), Nav1.6/SCN8A (IC(50)=6.6 uM), Nav1.7/SCN9A (IC(50)=13.6-1030 nM), potassium channels Kv11.1/KCNH2 (IC(50)=4.7 uM), as well as high-voltage-gated calcium channels Cav1.2/CACNA1C (IC(50)= nM). Also blocks mechanosensitive ion channels (also named stretch-activated channels or SACs) and the hypotonic cell swelling induced calcium increase associated with the activation of such channels. It can thus be useful in treating cardiac ventricular disturbances. Also induces analgesia in mammals. This is Kappa-theraphotoxin-Gr2c from Grammostola rosea (Chilean rose tarantula).